The following is a 1413-amino-acid chain: DNA-directed RNA polymerase subunit beta' (1413 aa).

Residues cysteine 70, cysteine 72, cysteine 85, and cysteine 88 each coordinate Zn(2+). Positions 460, 462, and 464 each coordinate Mg(2+). Zn(2+) contacts are provided by cysteine 819, cysteine 893, cysteine 900, and cysteine 903. Positions 1392–1413 (EEAFDFGTPSAPAEEPQHPAAE) are disordered.

The protein belongs to the RNA polymerase beta' chain family. In terms of assembly, the RNAP catalytic core consists of 2 alpha, 1 beta, 1 beta' and 1 omega subunit. When a sigma factor is associated with the core the holoenzyme is formed, which can initiate transcription. It depends on Mg(2+) as a cofactor. Zn(2+) serves as cofactor.

It carries out the reaction RNA(n) + a ribonucleoside 5'-triphosphate = RNA(n+1) + diphosphate. Functionally, DNA-dependent RNA polymerase catalyzes the transcription of DNA into RNA using the four ribonucleoside triphosphates as substrates. The chain is DNA-directed RNA polymerase subunit beta' from Burkholderia cenocepacia (strain ATCC BAA-245 / DSM 16553 / LMG 16656 / NCTC 13227 / J2315 / CF5610) (Burkholderia cepacia (strain J2315)).